Here is a 121-residue protein sequence, read N- to C-terminus: uncharacterized protein (121 aa).

Residues 6-26 form a helical membrane-spanning segment; that stretch reads ITTASILLVVIVAFCAAAPMI.

Its subcellular location is the membrane. This is an uncharacterized protein from Caenorhabditis elegans.